We begin with the raw amino-acid sequence, 379 residues long: tRNA(Met) cytidine acetate ligase (379 aa).

ATP-binding positions include 7–20 (ITEY…HQYH), glycine 100, asparagine 153, and arginine 178.

This sequence belongs to the TmcAL family.

It is found in the cytoplasm. The catalysed reaction is cytidine(34) in elongator tRNA(Met) + acetate + ATP = N(4)-acetylcytidine(34) in elongator tRNA(Met) + AMP + diphosphate. Its function is as follows. Catalyzes the formation of N(4)-acetylcytidine (ac(4)C) at the wobble position of elongator tRNA(Met), using acetate and ATP as substrates. First activates an acetate ion to form acetyladenylate (Ac-AMP) and then transfers the acetyl group to tRNA to form ac(4)C34. The protein is tRNA(Met) cytidine acetate ligase of Staphylococcus aureus (strain Mu3 / ATCC 700698).